Reading from the N-terminus, the 254-residue chain is Imidazole glycerol phosphate synthase subunit HisF (254 aa).

Catalysis depends on residues aspartate 12 and aspartate 131.

The protein belongs to the HisA/HisF family. As to quaternary structure, heterodimer of HisH and HisF.

It is found in the cytoplasm. The catalysed reaction is 5-[(5-phospho-1-deoxy-D-ribulos-1-ylimino)methylamino]-1-(5-phospho-beta-D-ribosyl)imidazole-4-carboxamide + L-glutamine = D-erythro-1-(imidazol-4-yl)glycerol 3-phosphate + 5-amino-1-(5-phospho-beta-D-ribosyl)imidazole-4-carboxamide + L-glutamate + H(+). It participates in amino-acid biosynthesis; L-histidine biosynthesis; L-histidine from 5-phospho-alpha-D-ribose 1-diphosphate: step 5/9. Functionally, IGPS catalyzes the conversion of PRFAR and glutamine to IGP, AICAR and glutamate. The HisF subunit catalyzes the cyclization activity that produces IGP and AICAR from PRFAR using the ammonia provided by the HisH subunit. The sequence is that of Imidazole glycerol phosphate synthase subunit HisF from Herminiimonas arsenicoxydans.